We begin with the raw amino-acid sequence, 194 residues long: Ion-translocating oxidoreductase complex subunit B (194 aa).

Positions 1–26 (MSSILIAVIAISALALVFGLILGFAS) are hydrophobic. Residues 32 to 90 (ESDPIVDQIDSILPQTQCGQCGYPGCKPYAEAIANGDTINKCPPGGQATIEKLADLMGV) enclose the 4Fe-4S domain. Cysteine 49, cysteine 52, cysteine 57, cysteine 73, cysteine 114, cysteine 117, cysteine 120, cysteine 124, cysteine 144, cysteine 147, cysteine 150, and cysteine 154 together coordinate [4Fe-4S] cluster. 4Fe-4S ferredoxin-type domains are found at residues 105 to 134 (KIAF…GGTK) and 135 to 164 (ALHT…MIPV).

It belongs to the 4Fe4S bacterial-type ferredoxin family. RnfB subfamily. The complex is composed of six subunits: RnfA, RnfB, RnfC, RnfD, RnfE and RnfG. Requires [4Fe-4S] cluster as cofactor.

It localises to the cell inner membrane. Part of a membrane-bound complex that couples electron transfer with translocation of ions across the membrane. The protein is Ion-translocating oxidoreductase complex subunit B of Aliivibrio salmonicida (strain LFI1238) (Vibrio salmonicida (strain LFI1238)).